The sequence spans 61 residues: MTEVKVKKGESIDKALRRLKRKLDREGTLREARLRKAFEKPCNRRRRKAKEARLKLYSSLY.

Belongs to the bacterial ribosomal protein bS21 family.

The sequence is that of Small ribosomal subunit protein bS21 from Methylacidiphilum infernorum (isolate V4) (Methylokorus infernorum (strain V4)).